Reading from the N-terminus, the 349-residue chain is 5-deoxyribose 1-phosphate isomerase (349 aa).

Substrate-binding positions include 49–51 (RGA), R92, and Q199. The Proton donor role is filled by D240. A substrate-binding site is contributed by 250 to 251 (NK).

It belongs to the EIF-2B alpha/beta/delta subunits family. DrdI subfamily.

The enzyme catalyses 5-deoxy-alpha-D-ribose 1-phosphate = 5-deoxy-D-ribulose 1-phosphate. Its pathway is carbohydrate degradation. Its function is as follows. Catalyzes the isomerization of 5-deoxy-alpha-D-ribose 1-phosphate to 5-deoxy-D-ribulose 1-phosphate, as part of a 5-deoxyribose salvage pathway that recycles this toxic radical SAM enzyme by-product to mainstream metabolites. The protein is 5-deoxyribose 1-phosphate isomerase of Clostridium botulinum (strain Langeland / NCTC 10281 / Type F).